Here is a 501-residue protein sequence, read N- to C-terminus: Ribose import ATP-binding protein RbsA 1 (501 aa).

2 consecutive ABC transporter domains span residues 5 to 241 (LQLK…VGRK) and 252 to 495 (APGD…VGKL). Residue 37–44 (GENGAGKS) participates in ATP binding.

The protein belongs to the ABC transporter superfamily. Ribose importer (TC 3.A.1.2.1) family. In terms of assembly, the complex is composed of an ATP-binding protein (RbsA), two transmembrane proteins (RbsC) and a solute-binding protein (RbsB).

The protein localises to the cell inner membrane. The enzyme catalyses D-ribose(out) + ATP + H2O = D-ribose(in) + ADP + phosphate + H(+). In terms of biological role, part of the ABC transporter complex RbsABC involved in ribose import. Responsible for energy coupling to the transport system. This chain is Ribose import ATP-binding protein RbsA 1, found in Escherichia coli O157:H7.